We begin with the raw amino-acid sequence, 948 residues long: FRIGIDA-like protein 5 (948 aa).

A coiled-coil region spans residues 47–164 (DSTRSVLEER…VEKHRERIVA (118 aa)). Disordered stretches follow at residues 447-500 (ESAQ…APSQ), 518-538 (VKESGADHQPDTIATHPSGTE), and 804-894 (RNTS…YPSH). Composition is skewed to basic and acidic residues over residues 459-475 (SYEKRQSTTKGVEKSEA) and 518-527 (VKESGADHQP). Residues 807-817 (SNGSGSGSASS) are compositionally biased toward low complexity. Positions 818–830 (KPDSTIKQSQTAK) are enriched in polar residues. The span at 861-872 (FSKKNKRGKKRS) shows a compositional bias: basic residues. The span at 873-894 (MSGNNQSSGHIASHTSNHYPSH) shows a compositional bias: polar residues.

It belongs to the Frigida family. Expressed at low levels during seed development.

In Arabidopsis thaliana (Mouse-ear cress), this protein is FRIGIDA-like protein 5 (FRL5).